The following is a 672-amino-acid chain: UvrABC system protein B (672 aa).

Residues 26-181 (AGLEDGLAYQ…ILQRLAELQY (156 aa)) form the Helicase ATP-binding domain. 39 to 46 (GVTGSGKT) provides a ligand contact to ATP. The Beta-hairpin motif lies at 92–115 (YYDYYQPEAYVPSSDTYIEKDASI). The Helicase C-terminal domain occupies 430 to 592 (QVDDLLSEIK…ITPKSIQKAV (163 aa)). The UVR domain maps to 631–666 (AKELRKLEEQMYHHARNLEFEEAAAVRDKIQHIRKG).

This sequence belongs to the UvrB family. As to quaternary structure, forms a heterotetramer with UvrA during the search for lesions. Interacts with UvrC in an incision complex.

It localises to the cytoplasm. The UvrABC repair system catalyzes the recognition and processing of DNA lesions. A damage recognition complex composed of 2 UvrA and 2 UvrB subunits scans DNA for abnormalities. Upon binding of the UvrA(2)B(2) complex to a putative damaged site, the DNA wraps around one UvrB monomer. DNA wrap is dependent on ATP binding by UvrB and probably causes local melting of the DNA helix, facilitating insertion of UvrB beta-hairpin between the DNA strands. Then UvrB probes one DNA strand for the presence of a lesion. If a lesion is found the UvrA subunits dissociate and the UvrB-DNA preincision complex is formed. This complex is subsequently bound by UvrC and the second UvrB is released. If no lesion is found, the DNA wraps around the other UvrB subunit that will check the other stand for damage. This chain is UvrABC system protein B, found in Coxiella burnetii (strain Dugway 5J108-111).